Here is a 466-residue protein sequence, read N- to C-terminus: Argininosuccinate lyase (466 aa).

This sequence belongs to the lyase 1 family. Argininosuccinate lyase subfamily.

The protein resides in the cytoplasm. It carries out the reaction 2-(N(omega)-L-arginino)succinate = fumarate + L-arginine. It functions in the pathway amino-acid biosynthesis; L-arginine biosynthesis; L-arginine from L-ornithine and carbamoyl phosphate: step 3/3. The polypeptide is Argininosuccinate lyase (Bartonella tribocorum (strain CIP 105476 / IBS 506)).